The following is a 482-amino-acid chain: MSQESSQKLRLGALTALVVGSMIGGGIFSLPQNMAASADVGAVLIGWAITAVGMLTLAFVFQTLANRKPELDGGVYAYAKAGFGDYMGFSSAWGYWISAWLGNVGYFVLLFSTLGYFFPIFGKGDTVAAIVCASVLLWALHFLVLRGIKEAAFINTVTTVAKVVPLFLFILICLFAFKLDIFTADIWGKSNPDLGSVMNQVRNMMLVTVWVFIGIEGASIFSSRAEKRSDVGKATVIGFITVLLLLVLVNVLSMGVMTQPELAKLQNPSMALVLEHVVGHWGAVLISVGLLISLLGALLSWVLLCAEIMFAAAKDHTMPEFLRRENANQVPANALWLTNICVQVFLVVVFFTSGDPDGMDPYTKMLLLATSMILIPYFWSAAYGLLLTLKGETYENDARERSKDLVIAGIAVAYAVWLLYAGGLKYLLLSALLYAPGAILFAKAKHEVGQPIFTGIEKLIFAAVVIGALVAAYGLYDGFLTL.

Over 1 to 10 (MSQESSQKLR) the chain is Cytoplasmic. The helical transmembrane segment at 11-31 (LGALTALVVGSMIGGGIFSLP) threads the bilayer. The Periplasmic segment spans residues 32–40 (QNMAASADV). A helical transmembrane segment spans residues 41-61 (GAVLIGWAITAVGMLTLAFVF). At 62–100 (QTLANRKPELDGGVYAYAKAGFGDYMGFSSAWGYWISAW) the chain is on the cytoplasmic side. The chain crosses the membrane as a helical span at residues 101-121 (LGNVGYFVLLFSTLGYFFPIF). Residues 122-124 (GKG) are Periplasmic-facing. The chain crosses the membrane as a helical span at residues 125 to 145 (DTVAAIVCASVLLWALHFLVL). The Cytoplasmic segment spans residues 146–156 (RGIKEAAFINT). The chain crosses the membrane as a helical span at residues 157–177 (VTTVAKVVPLFLFILICLFAF). The Periplasmic portion of the chain corresponds to 178–202 (KLDIFTADIWGKSNPDLGSVMNQVR). A helical membrane pass occupies residues 203–223 (NMMLVTVWVFIGIEGASIFSS). Over 224-235 (RAEKRSDVGKAT) the chain is Cytoplasmic. A helical membrane pass occupies residues 236-256 (VIGFITVLLLLVLVNVLSMGV). The Periplasmic segment spans residues 257-283 (MTQPELAKLQNPSMALVLEHVVGHWGA). The chain crosses the membrane as a helical span at residues 284–304 (VLISVGLLISLLGALLSWVLL). At 305-333 (CAEIMFAAAKDHTMPEFLRRENANQVPAN) the chain is on the cytoplasmic side. The chain crosses the membrane as a helical span at residues 334-354 (ALWLTNICVQVFLVVVFFTSG). The Periplasmic portion of the chain corresponds to 355 to 365 (DPDGMDPYTKM). A helical transmembrane segment spans residues 366-386 (LLLATSMILIPYFWSAAYGLL). Residues 387–403 (LTLKGETYENDARERSK) are Cytoplasmic-facing. Residues 404-424 (DLVIAGIAVAYAVWLLYAGGL) form a helical membrane-spanning segment. Position 425 (Lys-425) is a topological domain, periplasmic. The helical transmembrane segment at 426-446 (YLLLSALLYAPGAILFAKAKH) threads the bilayer. The Cytoplasmic segment spans residues 447–458 (EVGQPIFTGIEK). The chain crosses the membrane as a helical span at residues 459–479 (LIFAAVVIGALVAAYGLYDGF). The Periplasmic portion of the chain corresponds to 480-482 (LTL).

This sequence belongs to the amino acid-polyamine-organocation (APC) superfamily. Basic amino acid/polyamine antiporter (APA) (TC 2.A.3.2) family.

It is found in the cell inner membrane. The enzyme catalyses L-ornithine(in) + L-arginine(out) = L-ornithine(out) + L-arginine(in). Its function is as follows. Catalyzes electroneutral exchange between arginine and ornithine to allow high-efficiency energy conversion in the arginine deiminase pathway. Also mediates the proton motive force-driven uptake of arginine and ornithine, but the exchange is several orders of magnitude faster than the proton motive force-driven transport. The sequence is that of Arginine/ornithine antiporter from Pseudomonas aeruginosa (strain ATCC 15692 / DSM 22644 / CIP 104116 / JCM 14847 / LMG 12228 / 1C / PRS 101 / PAO1).